The primary structure comprises 314 residues: Probable cell division protein WhiA (314 aa).

A DNA-binding region (H-T-H motif) is located at residues 274–308; it reads SLKELGEMVSTGPISKSGVNHRLRKLNDLADKIRN.

Belongs to the WhiA family.

Involved in cell division and chromosome segregation. This chain is Probable cell division protein WhiA, found in Staphylococcus aureus (strain USA300).